Here is a 235-residue protein sequence, read N- to C-terminus: Ubiquitin-conjugating enzyme E2 R1 (235 aa).

The UBC core domain maps to 8 to 174; sequence SSQKALLLEL…IRKQVLGTKV (167 aa). The Glycyl thioester intermediate role is filled by Cys-93. The interval 98–113 is important for ubiquitin transfer; that stretch reads HPPVDDPQSGELPSER. Residues 190–235 form an SCF-binding region; the sequence is YCVKTKAPAPDEGSDLFYDDYYEDGEVEEADSCFGDEEDDSGTEES. A phosphoserine; by CK2 mark is found at Ser-203, Ser-221, and Ser-230. At Thr-232 the chain carries Phosphothreonine; by CK2. Ser-235 bears the Phosphoserine; by CK2 mark.

Belongs to the ubiquitin-conjugating enzyme family. Interacts with multiple Cul1-RING E3 ubiquitin-protein ligase complexes, also known as SCF (SKP1-CUL1-F-box protein) complexes. Identified in a SCF (SKP1-CUL1-F-box protein) E3 ubiquitin ligase complex together with HINT1 and RBX1. When cullin is neddylated, the interaction between the E2 and the SCF complex is strengthened. Interacts with multiple Cul2-RING (CRL2) E3 ubiquitin-protein ligase complexes, also known as ECS (Elongin BC-CUL2/5-SOCS-box protein) complexes. When phosphorylated, interacts with beta-TrCP (BTRC). Interacts with casein kinase subunit CSNK2B. Interacts with CNTD1; this interaction regulates the cell-cycle progression. Post-translationally, phosphorylated by CK2. Phosphorylation of the C-terminal tail by CK2 controls the nuclear localization.

Its subcellular location is the cytoplasm. The protein localises to the nucleus. The catalysed reaction is S-ubiquitinyl-[E1 ubiquitin-activating enzyme]-L-cysteine + [E2 ubiquitin-conjugating enzyme]-L-cysteine = [E1 ubiquitin-activating enzyme]-L-cysteine + S-ubiquitinyl-[E2 ubiquitin-conjugating enzyme]-L-cysteine.. The enzyme catalyses S-ubiquitinyl-[E1 ubiquitin-activating enzyme]-L-cysteine + [acceptor protein]-L-lysine = [E1 ubiquitin-activating enzyme]-L-cysteine + N(6)-monoubiquitinyl-[acceptor protein]-L-lysine.. It functions in the pathway protein modification; protein ubiquitination. With respect to regulation, CDC34-catalyzed polyubiquitin chain assembly activity is stimulated by the conjugation of NEDD8 to the CUL1 SCF E3 ligase complex subunit. In terms of biological role, E2 ubiquitin-conjugating enzyme that accepts ubiquitin from an E1 ubiquitin-activating protein, and catalyzes its covalent attachment to other proteins by an E3 ubiquitin-protein ligase complex. In vitro catalyzes 'Lys-48'-linked polyubiquitination. Cooperates with the E2 UBCH5C and the SCF(FBXW11) E3 ligase complex for the polyubiquitination of NFKBIA leading to its subsequent proteasomal degradation. Performs ubiquitin chain elongation building ubiquitin chains from the UBE2D3-primed NFKBIA-linked ubiquitin. UBE2D3 acts as an initiator E2, priming the phosphorylated NFKBIA target at positions 'Lys-21' and/or 'Lys-22' with a monoubiquitin. Cooperates with the SCF(SKP2) E3 ligase complex to regulate cell proliferation through ubiquitination and degradation of MYBL2 and KIP1. Involved in ubiquitin conjugation and degradation of CREM isoform ICERIIgamma and ATF15 resulting in abrogation of ICERIIgamma- and ATF5-mediated repression of cAMP-induced transcription during both meiotic and mitotic cell cycles. Involved in the regulation of the cell cycle G2/M phase through its targeting of the WEE1 kinase for ubiquitination and degradation. Also involved in the degradation of beta-catenin. The sequence is that of Ubiquitin-conjugating enzyme E2 R1 (Cdc34) from Mus musculus (Mouse).